A 521-amino-acid chain; its full sequence is FAD-dependent monooxygenase mdpD (521 aa).

The disordered stretch occupies residues 1–48; the sequence is MTHFPVNIASDKQEFDPERWAKTPTTESSVNGENGTAPTSGLPSRHPS. Residues 11–21 are compositionally biased toward basic and acidic residues; the sequence is DKQEFDPERWA. Residues 23–48 are compositionally biased toward polar residues; sequence TPTTESSVNGENGTAPTSGLPSRHPS. 2 residues coordinate FAD: Val-94 and Arg-160. Residues Arg-244 and Tyr-271 contribute to the active site. FAD-binding residues include Asp-369 and Gly-382.

The protein belongs to the paxM FAD-dependent monooxygenase family. FAD is required as a cofactor.

It participates in secondary metabolite biosynthesis. FAD-dependent monooxygenase; part of the gene cluster that mediates the biosynthesis of monodictyphenone, a prenyl xanthone derivative. The pathway begins with the synthesis of atrochrysone thioester by the polyketide synthase (PKS) mdpG. The atrochrysone carboxyl ACP thioesterase mdpF then breaks the thioester bond and releases the atrochrysone carboxylic acid from mdpG. The atrochrysone carboxylic acid is then converted to atrochrysone which is further transformed into emodin anthrone. The next step is performed by the anthrone oxygenase mdpH that catalyzes the oxidation of emodinanthrone to emodin. Emodin is further modified to yield monodictyphenone via several steps involving mdpB, mdpC mdpJ, mdpK and mdpL. These enzymes with xptA, xptB and xptC are also proposed to be involved in the synthesis of shamixanthone from emodin. Especially, direct reduction of emodin by the short chain dehydrogenase mdpC followed by dehydration catalyzed by the scytalone dehydratase-like protein mdpB gives loss of oxygen and formation of chrysophanol intermediate in two simple steps. The polypeptide is FAD-dependent monooxygenase mdpD (Emericella nidulans (strain FGSC A4 / ATCC 38163 / CBS 112.46 / NRRL 194 / M139) (Aspergillus nidulans)).